Here is a 194-residue protein sequence, read N- to C-terminus: CASP-like protein 2C2 (194 aa).

The Cytoplasmic segment spans residues 1–27 (MAAGQPRPPPPPSSVRTERVLRAACAA). Residues 28–48 (MAAAGALLLGFSAETKTVIFV) form a helical membrane-spanning segment. The Extracellular portion of the chain corresponds to 49 to 58 (QKKAVPKDVQ). Residues 59–79 (ALWVLIVAAAAAAAYHAAQLA) form a helical membrane-spanning segment. Topologically, residues 80–113 (RCLCMDRLAGGGGGCRRLRRAVACATFLLDKGCA) are cytoplasmic. A helical transmembrane segment spans residues 114-134 (YMVLATTVAALQACFVGLLGV). At 135–152 (EALQWSKLCNIYTRFCEQ) the chain is on the extracellular side. A helical transmembrane segment spans residues 153 to 173 (AAAGMVCSLVAAAGMAVLSAF). Over 174–194 (SARDLFRRRRPCSPCVQVQQV) the chain is Cytoplasmic.

Belongs to the Casparian strip membrane proteins (CASP) family. Homodimer and heterodimers.

The protein resides in the cell membrane. The chain is CASP-like protein 2C2 from Sorghum bicolor (Sorghum).